We begin with the raw amino-acid sequence, 163 residues long: 6,7-dimethyl-8-ribityllumazine synthase (163 aa).

Residues F27, 58–60 (ALE), and 87–89 (CVV) each bind 5-amino-6-(D-ribitylamino)uracil. 92–93 (DT) lines the (2S)-2-hydroxy-3-oxobutyl phosphate pocket. Residue H95 is the Proton donor of the active site. Residue N120 coordinates 5-amino-6-(D-ribitylamino)uracil. A (2S)-2-hydroxy-3-oxobutyl phosphate-binding site is contributed by R134.

Belongs to the DMRL synthase family.

The enzyme catalyses (2S)-2-hydroxy-3-oxobutyl phosphate + 5-amino-6-(D-ribitylamino)uracil = 6,7-dimethyl-8-(1-D-ribityl)lumazine + phosphate + 2 H2O + H(+). It participates in cofactor biosynthesis; riboflavin biosynthesis; riboflavin from 2-hydroxy-3-oxobutyl phosphate and 5-amino-6-(D-ribitylamino)uracil: step 1/2. Catalyzes the formation of 6,7-dimethyl-8-ribityllumazine by condensation of 5-amino-6-(D-ribitylamino)uracil with 3,4-dihydroxy-2-butanone 4-phosphate. This is the penultimate step in the biosynthesis of riboflavin. This chain is 6,7-dimethyl-8-ribityllumazine synthase, found in Nitrobacter hamburgensis (strain DSM 10229 / NCIMB 13809 / X14).